Here is a 556-residue protein sequence, read N- to C-terminus: Dihydroxy-acid dehydratase (556 aa).

Asp-78 is a Mg(2+) binding site. Residue Cys-119 coordinates [2Fe-2S] cluster. Residues Asp-120 and Lys-121 each coordinate Mg(2+). Lys-121 carries the N6-carboxylysine modification. Residue Cys-191 participates in [2Fe-2S] cluster binding. Residue Glu-442 participates in Mg(2+) binding. The active-site Proton acceptor is Ser-468.

It belongs to the IlvD/Edd family. In terms of assembly, homodimer. [2Fe-2S] cluster serves as cofactor. Requires Mg(2+) as cofactor.

The catalysed reaction is (2R)-2,3-dihydroxy-3-methylbutanoate = 3-methyl-2-oxobutanoate + H2O. It catalyses the reaction (2R,3R)-2,3-dihydroxy-3-methylpentanoate = (S)-3-methyl-2-oxopentanoate + H2O. It participates in amino-acid biosynthesis; L-isoleucine biosynthesis; L-isoleucine from 2-oxobutanoate: step 3/4. It functions in the pathway amino-acid biosynthesis; L-valine biosynthesis; L-valine from pyruvate: step 3/4. Functionally, functions in the biosynthesis of branched-chain amino acids. Catalyzes the dehydration of (2R,3R)-2,3-dihydroxy-3-methylpentanoate (2,3-dihydroxy-3-methylvalerate) into 2-oxo-3-methylpentanoate (2-oxo-3-methylvalerate) and of (2R)-2,3-dihydroxy-3-methylbutanoate (2,3-dihydroxyisovalerate) into 2-oxo-3-methylbutanoate (2-oxoisovalerate), the penultimate precursor to L-isoleucine and L-valine, respectively. This Clostridium kluyveri (strain NBRC 12016) protein is Dihydroxy-acid dehydratase.